The following is a 244-amino-acid chain: Carboxy-S-adenosyl-L-methionine synthase (244 aa).

Residues Tyr41, 66–68 (GCS), Asn134, and Arg201 contribute to the S-adenosyl-L-methionine site.

Belongs to the class I-like SAM-binding methyltransferase superfamily. Cx-SAM synthase family. In terms of assembly, homodimer.

The catalysed reaction is prephenate + S-adenosyl-L-methionine = carboxy-S-adenosyl-L-methionine + 3-phenylpyruvate + H2O. Catalyzes the conversion of S-adenosyl-L-methionine (SAM) to carboxy-S-adenosyl-L-methionine (Cx-SAM). The protein is Carboxy-S-adenosyl-L-methionine synthase of Cellvibrio japonicus (strain Ueda107) (Pseudomonas fluorescens subsp. cellulosa).